We begin with the raw amino-acid sequence, 276 residues long: MTDILQLSHHSYFISEESPITVERRHYQPPFPLHRHDFNEIVIISAGNGIHFWNDEIHPITTGNVLYIESGDKHKYGEVDKLKLDNILYRPEKLSLFPIMKDYIPHNNEKKSLRINQETLVQLQSLISQLEIESKKTNKSSMHLSEAIFLQILILICRTQQQENKAYSDISKLESLFSALNQSISQEFYLADFCRQHQLAVSSVRRIFKQQTNMTIAQYLQKLRLCRAATLLRNTSESVANIAIRCGYSDSNYFSSVFGKTFSCTPTEYRSRFIKK.

The HTH araC/xylS-type domain maps to E174–R272. DNA-binding regions (H-T-H motif) lie at residues A191–T212 and V239–F262.

In terms of assembly, binds DNA as a dimer.

The protein localises to the cytoplasm. Its function is as follows. Activates expression of the rhaSR operon in response to L-rhamnose. This Mannheimia succiniciproducens (strain KCTC 0769BP / MBEL55E) protein is HTH-type transcriptional activator RhaR.